The chain runs to 97 residues: Small ribosomal subunit protein bS20 (97 aa).

The tract at residues 1–22 is disordered; that stretch reads MANSKSALKRIRTSERNRLRNK.

The protein belongs to the bacterial ribosomal protein bS20 family.

Functionally, binds directly to 16S ribosomal RNA. In Crocosphaera subtropica (strain ATCC 51142 / BH68) (Cyanothece sp. (strain ATCC 51142)), this protein is Small ribosomal subunit protein bS20.